The sequence spans 430 residues: Aspartate aminotransferase, mitochondrial (430 aa).

A mitochondrion-targeting transit peptide spans 1 to 28 (MALAMMIRNAASKRGMTPISGHFGGLRS). L-aspartate contacts are provided by glycine 65, tryptophan 160, and asparagine 213. Lysine 277 bears the N6-(pyridoxal phosphate)lysine mark. Residue arginine 405 participates in L-aspartate binding.

Belongs to the class-I pyridoxal-phosphate-dependent aminotransferase family. In terms of assembly, homodimer. It depends on pyridoxal 5'-phosphate as a cofactor.

It localises to the mitochondrion matrix. It carries out the reaction L-aspartate + 2-oxoglutarate = oxaloacetate + L-glutamate. Amino acid aminotransferase important for the metabolism of amino acids and Krebs-cycle related organic acids. No activity with D-Asp or D-Ala as amino donors. In plants, it is involved in nitrogen metabolism and in aspects of carbon and energy metabolism. This is Aspartate aminotransferase, mitochondrial (ASP1) from Arabidopsis thaliana (Mouse-ear cress).